The primary structure comprises 264 residues: Astacin-like metalloprotease toxin 1 (264 aa).

The signal sequence occupies residues 1-16; it reads MIKYIGVFAFLVGGFC. Residues 17-51 constitute a propeptide that is removed on maturation; it reads HDFETVISNQDPIVDGMRLVEGDMLFDDGPLFTER. The region spanning 52 to 249 is the Peptidase M12A domain; it reads NAVKYDQQLW…VKVNKLYKCP (198 aa). Intrachain disulfides connect Cys-93–Cys-248 and Cys-114–Cys-135. His-143 contacts Zn(2+). The active site involves Glu-144. Zn(2+) is bound by residues His-147 and His-153. Asn-173 and Asn-185 each carry an N-linked (GlcNAc...) asparagine glycan.

Monomer. Zn(2+) serves as cofactor. Expressed by the venom gland.

The protein localises to the secreted. With respect to regulation, inhibited by 1,10-phenanthroline. Its function is as follows. Zinc metalloprotease. Provoques deadhesion of endothelial cells from cell cultures, and also degradation of fibronectin, fibrinogen and gelatin in vitro. Its role in the venom is not fully understood but it might act as a spreading factor that facilitates diffusion of other venom toxins. Alternatively, it might be involved in the proteolytic processing of other venom toxins or it might play a role in extra-oral digestion of prey. In Loxosceles intermedia (Brown spider), this protein is Astacin-like metalloprotease toxin 1.